We begin with the raw amino-acid sequence, 301 residues long: ATP synthase gamma chain (301 aa).

It belongs to the ATPase gamma chain family. In terms of assembly, F-type ATPases have 2 components, CF(1) - the catalytic core - and CF(0) - the membrane proton channel. CF(1) has five subunits: alpha(3), beta(3), gamma(1), delta(1), epsilon(1). CF(0) has three main subunits: a, b and c.

The protein resides in the cell inner membrane. Functionally, produces ATP from ADP in the presence of a proton gradient across the membrane. The gamma chain is believed to be important in regulating ATPase activity and the flow of protons through the CF(0) complex. The polypeptide is ATP synthase gamma chain (Bordetella parapertussis (strain 12822 / ATCC BAA-587 / NCTC 13253)).